Reading from the N-terminus, the 703-residue chain is MAAQAAGVSRQRAATQGLGSNQNALKYLGQDFKTLRQQCLDSGVLFKDPEFPACPSALGYKDLGPGSPQTQGIIWKRPTELCPSPQFIVGGATRTDICQGGLGDCWLLAAIASLTLNEELLYRVVPRDQDFQENYAGIFHFQFWQYGEWVEVVIDDRLPTKNGQLLFLHSEQGNEFWSALLEKAYAKLNGCYEALAGGSTVEGFEDFTGGISEFYDLKKPPANLYQIIRKALCAGSLLGCSIDVSSAAEAEAITSQKLVKSHAYSVTGVEEVNFQGHPEKLIRLRNPWGEVEWSGAWSDDAPEWNHIDPRRKEELDKKVEDGEFWMSLSDFVRQFSRLEICNLSPDSLSSEEVHKWNLVLFNGHWTRGSTAGGCQNYPATYWTNPQFKIRLDEVDEDQEESIGEPCCTVLLGLMQKNRRWRKRIGQGMLSIGYAVYQVPKELESHTDAHLGRDFFLAYQPSARTSTYVNLREVSGRARLPPGEYLVVPSTFEPFKDGEFCLRVFSEKKAQALEIGDVVAGNPYEPHPSEVDQEDDQFRRLFEKLAGKDSEITANALKILLNEAFSKRTDIKFDGFNINTCREMISLLDSNGTGTLGAVEFKTLWLKIQKYLEIYWETDYNHSGTIDAHEMRTALRKAGFTLNSQVQQTIALRYACSKLGINFDSFVACMIRLETLFKLFSLLDEDKDGMVQLSLAEWLCCVLV.

The 300-residue stretch at 45 to 344 (LFKDPEFPAC…FSRLEICNLS (300 aa)) folds into the Calpain catalytic domain. Catalysis depends on residues Cys-105, His-262, and Asn-286. The segment at 356–379 (WNLVLFNGHWTRGSTAGGCQNYPA) is domain III. EF-hand domains follow at residues 575–610 (FNIN…IQKY), 618–640 (DYNH…AGFT), and 670–703 (IRLE…CVLV). Ca(2+) contacts are provided by Asp-588, Asn-590, Thr-592, Thr-594, Glu-599, Asp-618, Asn-620, Ser-622, Thr-624, and Glu-629.

It belongs to the peptidase C2 family. As to quaternary structure, monomer and homooligomer. Interacts with COPS1/GPS1, COPB1, EYA2, NME2, NME4 and TOMM70. Ca(2+) serves as cofactor. Post-translationally, undergoes autolytic cleavage between Ala-5 and Ala-6 which gives rise to fragments extending from Ala-6 to the C-terminus, Ala-6 to the EF-hand 2 domain and from Ala-6 to the beginning of domain III. As to expression, stomach.

Its subcellular location is the cytoplasm. It is found in the golgi apparatus. The catalysed reaction is Broad endopeptidase specificity.. Functionally, calcium-regulated non-lysosomal thiol-protease. Involved in membrane trafficking in the gastric surface mucus cells (pit cells) and may involve the membrane trafficking of mucus cells via interactions with coat protein. Proteolytically cleaves the beta-subunit of coatomer complex. The polypeptide is Calpain-8 (CAPN8) (Homo sapiens (Human)).